We begin with the raw amino-acid sequence, 798 residues long: MKFKYGAIVFSGLLGVSAILAACGTRGKFDQIDDGKIKLASSLTSKGAANALQAIVKKYNEVKKPGDYPIEITQIAGGYDQARVDLQSRVGVKDKTNFYNLILNYPDVVSVLARNQMELPFDGVDVSKISPNFLNFNERISGVSKKANYAIPVSVSTDILVLNGPVLHYILNSAKGESKGAQKDNKSAEVQRKSTGQKTVTQPLTIATDSATNGLWKKIEDAAKVNGKKKEEKKSTRSKRATEGTQTTKENTGGDAATSDTKIKESWGAYQEVEGGLKGYQFKAIVFENWHDLIDFSTRVAKSFSKVKDNSNKKGNEIQGVLGVDNSPNALLSSVFAAGNSDYNNFFYKVQNGRADFSNFNNKGSSYKNLKNVFNDYKNLIAQNGLYVNKGGSYSSNFQKFHQLAYSISSTSGFAYSFAGQNSKRFKFTDDGTFVEYPSYTTEVNAPESNNGNDGKQQGQSDQGNLLGTFEVVDKSTSDIKVKPKTQAESKKSSDSKQTANTGKGSNSKQQTPKKTISLYKTKIPQDKTENVDAFLVTDSELISKLEKAKNKKEETKASGKSASARVAVQATQKKQSNEKQIVGYTTTSALSEDGKHIFKLGKLNSENYERKIIVGATVETLEQSTTLQSEEAIVLAAPGKYKDSDQKRVMITQGPNLIGVHANTKENEETKKFVNWFLNKTESWEVKGNGKDSQTTKSLTPAQYFAESASYILPLKETVEKDHKEQTNKNTYVAKALEMLKEVSENKSVSYSDPSDFRSGRFRDALGANFNATINSKANFEKFFQGFKAALGSDFDK.

An N-terminal signal peptide occupies residues 1 to 22 (MKFKYGAIVFSGLLGVSAILAA). A lipid anchor (N-palmitoyl cysteine) is attached at Cys-23. A lipid anchor (S-diacylglycerol cysteine) is attached at Cys-23. Residues 178-192 (SKGAQKDNKSAEVQR) are compositionally biased toward basic and acidic residues. 4 disordered regions span residues 178–204 (SKGA…TQPL), 226–260 (NGKK…ATSD), 443–463 (EVNA…QSDQ), and 478–515 (SDIK…TPKK). The span at 193–204 (KSTGQKTVTQPL) shows a compositional bias: polar residues. Basic and acidic residues predominate over residues 226–235 (NGKKKEEKKS). Over residues 478–495 (SDIKVKPKTQAESKKSSD) the composition is skewed to basic and acidic residues. Over residues 496 to 515 (SKQTANTGKGSNSKQQTPKK) the composition is skewed to polar residues.

This sequence belongs to the MG185/MG260 family.

The protein resides in the cell membrane. This is an uncharacterized protein from Mycoplasma pneumoniae (strain ATCC 29342 / M129 / Subtype 1) (Mycoplasmoides pneumoniae).